The sequence spans 406 residues: WD repeat and SOCS box-containing protein 2 (406 aa).

Residues 70–89 (AKSRSSKNETKGRGSPKEKT) form a disordered region. 5 WD repeats span residues 107-150 (PPSK…LLLN), 153-193 (GHQD…KQIQ), 197-236 (GHLQWVYCCSISPDCSMLCSAAGEKSVFLWSMRSYTLIRK), 239-278 (GHQSSVVSCDFSPDSALLVTASYDTNVIMWDPYTGERLRS), and 293-332 (VHISSLRSVCFSPEGLYLATVADDRLLRIWALELKTPIAF). An SOCS box domain is found at 358–406 (HVQFWTAPRVLSSLKHLCRKALRSFLTTYQVLALPIPKKMKEFLTYRTF).

The protein operates within protein modification; protein ubiquitination. Its function is as follows. May be a substrate-recognition component of a SCF-like ECS (Elongin-Cullin-SOCS-box protein) E3 ubiquitin ligase complex which mediates the ubiquitination and subsequent proteasomal degradation of target proteins. The protein is WD repeat and SOCS box-containing protein 2 (WSB2) of Bos taurus (Bovine).